A 560-amino-acid polypeptide reads, in one-letter code: Dihydroxy-acid dehydratase (560 aa).

Aspartate 80 contacts Mg(2+). Residue cysteine 121 participates in [2Fe-2S] cluster binding. 2 residues coordinate Mg(2+): aspartate 122 and lysine 123. An N6-carboxylysine modification is found at lysine 123. A [2Fe-2S] cluster-binding site is contributed by cysteine 194. A Mg(2+)-binding site is contributed by glutamate 447. Serine 473 serves as the catalytic Proton acceptor.

The protein belongs to the IlvD/Edd family. As to quaternary structure, homodimer. The cofactor is [2Fe-2S] cluster. Requires Mg(2+) as cofactor.

It carries out the reaction (2R)-2,3-dihydroxy-3-methylbutanoate = 3-methyl-2-oxobutanoate + H2O. The catalysed reaction is (2R,3R)-2,3-dihydroxy-3-methylpentanoate = (S)-3-methyl-2-oxopentanoate + H2O. It functions in the pathway amino-acid biosynthesis; L-isoleucine biosynthesis; L-isoleucine from 2-oxobutanoate: step 3/4. It participates in amino-acid biosynthesis; L-valine biosynthesis; L-valine from pyruvate: step 3/4. Functions in the biosynthesis of branched-chain amino acids. Catalyzes the dehydration of (2R,3R)-2,3-dihydroxy-3-methylpentanoate (2,3-dihydroxy-3-methylvalerate) into 2-oxo-3-methylpentanoate (2-oxo-3-methylvalerate) and of (2R)-2,3-dihydroxy-3-methylbutanoate (2,3-dihydroxyisovalerate) into 2-oxo-3-methylbutanoate (2-oxoisovalerate), the penultimate precursor to L-isoleucine and L-valine, respectively. The sequence is that of Dihydroxy-acid dehydratase from Chlorobaculum parvum (strain DSM 263 / NCIMB 8327) (Chlorobium vibrioforme subsp. thiosulfatophilum).